Reading from the N-terminus, the 318-residue chain is Protein W (318 aa).

2 disordered regions span residues 1–24 (MDQD…GRES) and 38–318 (SEPT…KKGA). Positions 7 to 20 (ISKEDSEVEREASG) are enriched in basic and acidic residues. The span at 50-61 (LHNTINTLQRPG) shows a compositional bias: polar residues. 2 stretches are compositionally biased toward basic and acidic residues: residues 99–110 (AEAHARNVDKQN) and 150–168 (GAED…RGED). A phosphoserine; by host mark is found at Ser-249, Ser-257, and Ser-260.

This chain is Protein W (P/V/C), found in Sendai virus (strain Hamamatsu) (SeV).